The primary structure comprises 275 residues: tRNA (guanine-N(1)-)-methyltransferase (275 aa).

S-adenosyl-L-methionine is bound by residues G139 and 159–164; that span reads IGDYIL.

This sequence belongs to the RNA methyltransferase TrmD family. In terms of assembly, homodimer.

The protein resides in the cytoplasm. The enzyme catalyses guanosine(37) in tRNA + S-adenosyl-L-methionine = N(1)-methylguanosine(37) in tRNA + S-adenosyl-L-homocysteine + H(+). In terms of biological role, specifically methylates guanosine-37 in various tRNAs. In Lachnoclostridium phytofermentans (strain ATCC 700394 / DSM 18823 / ISDg) (Clostridium phytofermentans), this protein is tRNA (guanine-N(1)-)-methyltransferase.